Consider the following 361-residue polypeptide: Peptide chain release factor 1 (361 aa).

At Q235 the chain carries N5-methylglutamine. Residues 283–306 (RSQQATAEAMTRKLQVGSGDRSQR) are disordered.

Belongs to the prokaryotic/mitochondrial release factor family. Post-translationally, methylated by PrmC. Methylation increases the termination efficiency of RF1.

The protein resides in the cytoplasm. In terms of biological role, peptide chain release factor 1 directs the termination of translation in response to the peptide chain termination codons UAG and UAA. This is Peptide chain release factor 1 from Xylella fastidiosa (strain M23).